The chain runs to 371 residues: Putative glutamate--cysteine ligase 2 (371 aa).

Belongs to the glutamate--cysteine ligase type 2 family. YbdK subfamily.

It carries out the reaction L-cysteine + L-glutamate + ATP = gamma-L-glutamyl-L-cysteine + ADP + phosphate + H(+). Its function is as follows. ATP-dependent carboxylate-amine ligase which exhibits weak glutamate--cysteine ligase activity. This Burkholderia ambifaria (strain MC40-6) protein is Putative glutamate--cysteine ligase 2.